We begin with the raw amino-acid sequence, 466 residues long: tRNA modification GTPase MnmE (466 aa).

(6S)-5-formyl-5,6,7,8-tetrahydrofolate contacts are provided by Arg-23, Glu-86, and Lys-125. One can recognise a TrmE-type G domain in the interval 221 to 388 (GIPVAIVGEP…LKNELLSFVN (168 aa)). Asn-231 is a binding site for K(+). GTP is bound by residues 231 to 236 (NVGKST), 250 to 256 (SDIAGTT), and 275 to 278 (DTAG). Ser-235 is a binding site for Mg(2+). K(+)-binding residues include Ser-250, Ile-252, and Thr-255. Thr-256 is a binding site for Mg(2+). Lys-466 contacts (6S)-5-formyl-5,6,7,8-tetrahydrofolate.

The protein belongs to the TRAFAC class TrmE-Era-EngA-EngB-Septin-like GTPase superfamily. TrmE GTPase family. In terms of assembly, homodimer. Heterotetramer of two MnmE and two MnmG subunits. K(+) is required as a cofactor.

The protein localises to the cytoplasm. Exhibits a very high intrinsic GTPase hydrolysis rate. Involved in the addition of a carboxymethylaminomethyl (cmnm) group at the wobble position (U34) of certain tRNAs, forming tRNA-cmnm(5)s(2)U34. The sequence is that of tRNA modification GTPase MnmE from Flavobacterium johnsoniae (strain ATCC 17061 / DSM 2064 / JCM 8514 / BCRC 14874 / CCUG 350202 / NBRC 14942 / NCIMB 11054 / UW101) (Cytophaga johnsonae).